A 126-amino-acid chain; its full sequence is Glycine cleavage system H protein (126 aa).

One can recognise a Lipoyl-binding domain in the interval 24 to 105 (TLTVGITDHA…AYGVWLFKIK (82 aa)). K65 bears the N6-lipoyllysine mark.

Belongs to the GcvH family. The glycine cleavage system is composed of four proteins: P, T, L and H. The cofactor is (R)-lipoate.

Functionally, the glycine cleavage system catalyzes the degradation of glycine. The H protein shuttles the methylamine group of glycine from the P protein to the T protein. The chain is Glycine cleavage system H protein from Burkholderia cenocepacia (strain HI2424).